The following is a 35-amino-acid chain: Anti-H(O) lectin 3 (35 aa).

Belongs to the leguminous lectin family. As to quaternary structure, homodimer. In terms of processing, highly glycosylated.

Its function is as follows. Binds lactose or galactose. In Ulex europaeus (Furze), this protein is Anti-H(O) lectin 3.